A 352-amino-acid chain; its full sequence is Phosphoribosylformylglycinamidine cyclo-ligase (352 aa).

The protein belongs to the AIR synthase family.

The protein localises to the cytoplasm. It carries out the reaction 2-formamido-N(1)-(5-O-phospho-beta-D-ribosyl)acetamidine + ATP = 5-amino-1-(5-phospho-beta-D-ribosyl)imidazole + ADP + phosphate + H(+). It participates in purine metabolism; IMP biosynthesis via de novo pathway; 5-amino-1-(5-phospho-D-ribosyl)imidazole from N(2)-formyl-N(1)-(5-phospho-D-ribosyl)glycinamide: step 2/2. The chain is Phosphoribosylformylglycinamidine cyclo-ligase from Teredinibacter turnerae (strain ATCC 39867 / T7901).